The following is a 174-amino-acid chain: Actin-related protein 2/3 complex subunit 3 (174 aa).

The protein belongs to the ARPC3 family. In terms of assembly, component of the Arp2/3 complex composed of arp2, act2, arc1/p41-ARC, arc2/p34-ARC, arc3/p21-ARC, arc4/p20-ARC and arc5/p16-ARC.

Its subcellular location is the cytoplasm. The protein localises to the cytoskeleton. The protein resides in the actin patch. Functionally, functions as a component of the Arp2/3 complex which is involved in regulation of actin polymerization and together with an activating nucleation-promoting factor (NPF) mediates the formation of branched actin networks. The polypeptide is Actin-related protein 2/3 complex subunit 3 (arc3) (Schizosaccharomyces pombe (strain 972 / ATCC 24843) (Fission yeast)).